The following is a 206-amino-acid chain: Putative amino-acid transporter YggA (206 aa).

Helical transmembrane passes span M1–A21, L37–G57, S65–I85, L116–F136, F148–A168, and T185–A205.

This sequence belongs to the LysE/ArgO transporter (TC 2.A.75) family.

The protein localises to the cell membrane. The sequence is that of Putative amino-acid transporter YggA (yggA) from Aeromonas salmonicida.